A 98-amino-acid polypeptide reads, in one-letter code: PsbF-like protein (98 aa).

Helical transmembrane passes span Val-5–Lys-25 and Thr-73–Met-93.

It belongs to the PsbE/PsbF family.

The protein localises to the membrane. Its function is as follows. Unknown. Resembles PsbF, one of the subunits of the photosystem II reaction center. However, it encodes asparagine rather than histidine at the site PsbF uses to bind heme. The sequence is that of PsbF-like protein from Prochlorococcus marinus (strain MIT 9312).